A 726-amino-acid chain; its full sequence is Catalase-peroxidase (726 aa).

A compositionally biased stretch (polar residues) spans 1–13 (MSMSEETNNSLSS). Residues 1-34 (MSMSEETNNSLSSGKCPFHHGGSDQSAGEGTGSR) form a disordered region. Positions 105–226 (WHGAGTYRSV…LAATEMGLIY (122 aa)) form a cross-link, tryptophyl-tyrosyl-methioninium (Trp-Tyr) (with M-252). The Proton acceptor role is filled by His106. Positions 226 to 252 (YVNPEGPNASGEPLSAAAAIRATFGNM) form a cross-link, tryptophyl-tyrosyl-methioninium (Tyr-Met) (with W-105). Residue His267 participates in heme b binding.

The protein belongs to the peroxidase family. Peroxidase/catalase subfamily. As to quaternary structure, homodimer or homotetramer. Requires heme b as cofactor. In terms of processing, formation of the three residue Trp-Tyr-Met cross-link is important for the catalase, but not the peroxidase activity of the enzyme.

It catalyses the reaction H2O2 + AH2 = A + 2 H2O. It carries out the reaction 2 H2O2 = O2 + 2 H2O. Bifunctional enzyme with both catalase and broad-spectrum peroxidase activity. This Enterobacter sp. (strain 638) protein is Catalase-peroxidase.